A 555-amino-acid chain; its full sequence is Inositol 1,4,5-triphosphate receptor associated 2 (555 aa).

The Cytoplasmic portion of the chain corresponds to 1-495 (MESTPFSGVA…LKSSIRKANK (495 aa)). Disordered regions lie at residues 84–103 (SLPLPRHTSSTDGTITSSDP) and 128–147 (RSASPTIEAQGTSPAHDNIA). At Thr91 the chain carries Phosphothreonine. Residues 91–102 (TSSTDGTITSSD) are compositionally biased toward low complexity. Positions 129 to 142 (SASPTIEAQGTSPA) are enriched in polar residues. Residues 227–341 (TLEKRVKLEE…LEELKQVLLQ (115 aa)) adopt a coiled-coil conformation. Phosphoserine is present on residues Ser363, Ser370, and Ser424. The tract at residues 437-469 (ELKTKDDSEPSGEETVERTRKPSLSEKKNNPSK) is disordered. Over residues 451–465 (TVERTRKPSLSEKKN) the composition is skewed to basic and acidic residues. Residues 496–516 (ALWLSIAFIVLFAALMSFLTG) traverse the membrane as a helical; Anchor for type IV membrane protein segment. The Lumenal portion of the chain corresponds to 517–555 (QLFQKSVDAAPTQQEDSWTSLEHILWPFTRLRHNGPPPV).

This sequence belongs to the IRAG2 family. Interacts (via coiled-coil domain) with ITPR3. Interacts with SUN1 and SUN2. Interacts with microtubules. Interacts with HCN4; regulates HCN4 channel activity. Post-translationally, the removal of the C-terminal lumenal domain occurs by proteolytic processing. As to expression, expressed at high levels in pre B-cells, mature B-cells and pre T-cells. Expressed at low levels in mature T-cells and plasma B-cells. Expressed in germinal center B-cells, splenic marginal zone cells and B-cell lymphomas. Expressed in neuronal cells in the cerebral cortex, epithelial cells in tonsil, adrenal glands, zymogen-producing cells in the stomach and epithelial cells in seminal vesicles.

It is found in the cytoplasm. The protein localises to the endoplasmic reticulum membrane. It localises to the nucleus envelope. Its subcellular location is the cytoskeleton. The protein resides in the microtubule organizing center. It is found in the centrosome. The protein localises to the spindle pole. It localises to the chromosome. In terms of biological role, plays a role in the delivery of peptides to major histocompatibility complex (MHC) class I molecules; this occurs in a transporter associated with antigen processing (TAP)-independent manner. May play a role in taste signal transduction via ITPR3. May play a role during fertilization in pronucleus congression and fusion. Plays a role in maintaining nuclear shape, maybe as a component of the LINC complex and through interaction with microtubules. Plays a role in the regulation of cellular excitability by regulating the hyperpolarization-activated cyclic nucleotide-gated HCN4 channel activity. The protein is Inositol 1,4,5-triphosphate receptor associated 2 of Homo sapiens (Human).